The primary structure comprises 218 residues: Small ribosomal subunit protein uS3 (218 aa).

The KH type-2 domain maps to Ile38–Lys106.

This sequence belongs to the universal ribosomal protein uS3 family. Part of the 30S ribosomal subunit. Forms a tight complex with proteins S10 and S14.

Functionally, binds the lower part of the 30S subunit head. Binds mRNA in the 70S ribosome, positioning it for translation. This Listeria monocytogenes serotype 4b (strain F2365) protein is Small ribosomal subunit protein uS3.